The primary structure comprises 569 residues: Urease subunit alpha (569 aa).

One can recognise a Urease domain in the interval 131-569 (GGIDTHIHFI…LPLAQRYLLL (439 aa)). 3 residues coordinate Ni(2+): His-136, His-138, and Lys-219. Lys-219 carries the N6-carboxylysine modification. Position 221 (His-221) interacts with substrate. Ni(2+)-binding residues include His-248 and His-274. His-322 acts as the Proton donor in catalysis. Asp-362 is a Ni(2+) binding site.

It belongs to the metallo-dependent hydrolases superfamily. Urease alpha subunit family. In terms of assembly, heterotrimer of UreA (gamma), UreB (beta) and UreC (alpha) subunits. Three heterotrimers associate to form the active enzyme. It depends on Ni cation as a cofactor. Carboxylation allows a single lysine to coordinate two nickel ions.

It localises to the cytoplasm. It catalyses the reaction urea + 2 H2O + H(+) = hydrogencarbonate + 2 NH4(+). It participates in nitrogen metabolism; urea degradation; CO(2) and NH(3) from urea (urease route): step 1/1. This chain is Urease subunit alpha, found in Synechococcus sp. (strain WH7805).